Reading from the N-terminus, the 377-residue chain is Probable sensor histidine kinase HK (377 aa).

Disordered regions lie at residues 1 to 169 and 346 to 377; these read MAHP…RPAD and LPTPRPPFHEELPRITSSDTKDPNREHDTSDQ. A compositionally biased stretch (basic residues) spans 10–54; the sequence is RLQRRHGARSGSSRCRHRRPVPRRRSRSRPRWRAARAHRRHHRRS. Basic and acidic residues predominate over residues 84–98; that stretch reads RRPDPRGGANTDHHA. Composition is skewed to basic residues over residues 99-115 and 137-146; these read APRHRRAAAGTSHRRRD and TTVRRRRQPR. A Histidine kinase domain is found at 146-350; sequence RITHPVGTAD…ELRITLPTPR (205 aa). The residue at position 149 (His-149) is a Phosphohistidine; by autocatalysis. The segment covering 352-377 has biased composition (basic and acidic residues); sequence PFHEELPRITSSDTKDPNREHDTSDQ.

Autophosphorylated.

It catalyses the reaction ATP + protein L-histidine = ADP + protein N-phospho-L-histidine.. Functionally, member of the two-component system HK/TcrA. Phosphorylates TcrA. The sequence is that of Probable sensor histidine kinase HK from Mycobacterium tuberculosis (strain CDC 1551 / Oshkosh).